The primary structure comprises 166 residues: Protein SprT (166 aa).

The 146-residue stretch at 19–164 (RDALARANLK…CVRCGDTLVA (146 aa)) folds into the SprT-like domain. Residue H78 coordinates Zn(2+). E79 is a catalytic residue. H82 lines the Zn(2+) pocket.

It belongs to the SprT family. Zn(2+) serves as cofactor.

It is found in the cytoplasm. This chain is Protein SprT, found in Cronobacter sakazakii (strain ATCC BAA-894) (Enterobacter sakazakii).